Consider the following 240-residue polypeptide: 2,3,4,5-tetrahydropyridine-2,6-dicarboxylate N-acetyltransferase (240 aa).

It belongs to the transferase hexapeptide repeat family. DapH subfamily.

It catalyses the reaction (S)-2,3,4,5-tetrahydrodipicolinate + acetyl-CoA + H2O = L-2-acetamido-6-oxoheptanedioate + CoA. Its pathway is amino-acid biosynthesis; L-lysine biosynthesis via DAP pathway; LL-2,6-diaminopimelate from (S)-tetrahydrodipicolinate (acetylase route): step 1/3. Functionally, catalyzes the transfer of an acetyl group from acetyl-CoA to tetrahydrodipicolinate. The chain is 2,3,4,5-tetrahydropyridine-2,6-dicarboxylate N-acetyltransferase from Bacillus anthracis (strain A0248).